Reading from the N-terminus, the 695-residue chain is DSC E3 ubiquitin ligase complex subunit 1 (695 aa).

The signal sequence occupies residues 1-25 (MDRRRWVPSTPVVTLLLLFMLFAPA). Residues 26–319 (PRLPSRNGES…KGPRNFVLEN (294 aa)) are Lumenal-facing. Residues 320-340 (HLVRFSSLYIFIVLSQIFVLL) traverse the membrane as a helical segment. Residues 341–353 (RQMRINSPSHVQR) lie on the Cytoplasmic side of the membrane. A helical transmembrane segment spans residues 354–374 (LSFLTIAMQAGLDAYIAIFFL). The Lumenal portion of the chain corresponds to 375-382 (STNAVIEK). Residues 383-403 (GYLPFVSVAFLSLVPSVMFTM) traverse the membrane as a helical segment. Topologically, residues 404 to 486 (RYLALILRVQ…QRDWSAVCLR (83 aa)) are cytoplasmic. The segment at 419–473 (PPAPRPVTNNSSNNNTNQSNASNENSPNAPSAANDNTETTTVNPPQEDDQPMTQH) is disordered. Residues 427 to 454 (NNSSNNNTNQSNASNENSPNAPSAANDN) are compositionally biased toward low complexity. Residues 487–507 (FYFIILVVCIASLYSAFWPVI) form a helical membrane-spanning segment. The Lumenal segment spans residues 508–509 (YR). The chain crosses the membrane as a helical span at residues 510 to 530 (FYFISALIFTSYSFWIPQIIQ). Residues 531 to 540 (NVKQGTSRSF) are Cytoplasmic-facing. Residues 541 to 561 (TWTYILGASVLRLYLPLAIFI) form a helical membrane-spanning segment. The Lumenal segment spans residues 562-572 (DSELILGFPPK). A helical membrane pass occupies residues 573–593 (YFFALGLVLWMLFQVLVLLVQ). The Cytoplasmic portion of the chain corresponds to 594–695 (DTLGPRFFLP…PVCRCHLPAV (102 aa)). Residues 634–689 (CPICMQPIELVSTGSTLNPASMMVRRNYMLTPCHHLYHRQCLLQWMETRSICPVCR) form an RING-type; atypical zinc finger.

Component of the DSC E3 ubiquitin ligase complex composed of dsc1, dsc2, dsc3 and dsc4.

The protein resides in the endoplasmic reticulum membrane. It localises to the golgi apparatus membrane. It carries out the reaction S-ubiquitinyl-[E2 ubiquitin-conjugating enzyme]-L-cysteine + [acceptor protein]-L-lysine = [E2 ubiquitin-conjugating enzyme]-L-cysteine + N(6)-ubiquitinyl-[acceptor protein]-L-lysine.. It functions in the pathway protein modification; protein ubiquitination. In terms of biological role, catalytic component of the DSC E3 ubiquitin ligase complex which is required for the sre1 transcriptional activator proteolytic cleavage to release the soluble transcription factor from the membrane in low oxygen or sterol conditions. The complex also plays an important role in the multivesicular body (MVB) pathway and functions in a post-endoplasmic reticulum pathway for protein degradation. The protein is DSC E3 ubiquitin ligase complex subunit 1 (dsc1) of Schizosaccharomyces pombe (strain 972 / ATCC 24843) (Fission yeast).